A 114-amino-acid chain; its full sequence is Fumarate reductase subunit D (114 aa).

3 helical membrane-spanning segments follow: residues 25-45, 50-70, and 94-114; these read SGLA…FGII, IIAF…TIFP, and LIFY…VIAI.

The protein belongs to the FrdD family. In terms of assembly, part of an enzyme complex containing four subunits: a flavoprotein (FrdA), an iron-sulfur protein (FrdB), and two hydrophobic anchor proteins (FrdC and FrdD).

It localises to the cell inner membrane. Functionally, anchors the catalytic components of the fumarate reductase complex to the cell membrane, binds quinones. In Mannheimia succiniciproducens (strain KCTC 0769BP / MBEL55E), this protein is Fumarate reductase subunit D.